Consider the following 1157-residue polypeptide: uncharacterized protein (1157 aa).

Positions 1 to 18 (MNRNIFITLLISLLALSG) are cleaved as a signal peptide. Residue cysteine 19 is the site of N-palmitoyl cysteine attachment. A lipid anchor (S-diacylglycerol cysteine) is attached at cysteine 19. 4 consecutive transmembrane segments (helical) span residues 292-312 (LSVSALLTLYIMFTGFSFLIG), 394-414 (LGFIYIILYLIALYFIFLLIF), 423-443 (ALITIGMIITMAPIFICFMLF), and 458-478 (ISYAIQPIILFVGIAFIGMII). Positions 1134 to 1157 (QYQKPVENSGRKLRKLEDHLRNMK) are disordered. Residues 1148-1157 (KLEDHLRNMK) show a composition bias toward basic and acidic residues.

It belongs to the TrbL/VirB6 family.

The protein localises to the cell membrane. This is an uncharacterized protein from Rickettsia bellii (strain RML369-C).